Here is a 294-residue protein sequence, read N- to C-terminus: Cytidine deaminase (294 aa).

2 CMP/dCMP-type deaminase domains span residues 48–168 and 187–294; these read DDDA…FGPT and AETD…RVTF. A substrate-binding site is contributed by 89 to 91; sequence NME. Residue His-102 participates in Zn(2+) binding. Residue Glu-104 is the Proton donor of the active site. Residues Cys-129 and Cys-132 each contribute to the Zn(2+) site.

It belongs to the cytidine and deoxycytidylate deaminase family. In terms of assembly, homodimer. Zn(2+) is required as a cofactor.

The catalysed reaction is cytidine + H2O + H(+) = uridine + NH4(+). It catalyses the reaction 2'-deoxycytidine + H2O + H(+) = 2'-deoxyuridine + NH4(+). Its function is as follows. This enzyme scavenges exogenous and endogenous cytidine and 2'-deoxycytidine for UMP synthesis. The sequence is that of Cytidine deaminase from Yersinia pseudotuberculosis serotype O:1b (strain IP 31758).